The sequence spans 696 residues: L-amino-acid oxidase (696 aa).

A propeptide spanning residues M1–R130 is cleaved from the precursor. Residues E207, R215, M236–R237, and V440 contribute to the FAD site. R237 is a binding site for substrate. Y564 provides a ligand contact to substrate. Residues E649 and I658–A661 each bind FAD.

The protein belongs to the flavin monoamine oxidase family. FAD is required as a cofactor.

The catalysed reaction is an L-alpha-amino acid + O2 + H2O = a 2-oxocarboxylate + H2O2 + NH4(+). In Neurospora crassa (strain ATCC 24698 / 74-OR23-1A / CBS 708.71 / DSM 1257 / FGSC 987), this protein is L-amino-acid oxidase (lox).